The following is a 284-amino-acid chain: Aliphatic sulfonates import ATP-binding protein SsuB (284 aa).

Residues 21 to 242 (LRIAHAVKRY…HRGAPAFARL (222 aa)) enclose the ABC transporter domain. 53–60 (GRSGCGKS) serves as a coordination point for ATP.

This sequence belongs to the ABC transporter superfamily. Aliphatic sulfonates importer (TC 3.A.1.17.2) family. As to quaternary structure, the complex is composed of two ATP-binding proteins (SsuB), two transmembrane proteins (SsuC) and a solute-binding protein (SsuA).

The protein resides in the cell inner membrane. It carries out the reaction ATP + H2O + aliphatic sulfonate-[sulfonate-binding protein]Side 1 = ADP + phosphate + aliphatic sulfonateSide 2 + [sulfonate-binding protein]Side 1.. Part of the ABC transporter complex SsuABC involved in aliphatic sulfonates import. Responsible for energy coupling to the transport system. The polypeptide is Aliphatic sulfonates import ATP-binding protein SsuB (Ralstonia nicotianae (strain ATCC BAA-1114 / GMI1000) (Ralstonia solanacearum)).